The chain runs to 273 residues: NADPH-dependent 7-cyano-7-deazaguanine reductase (273 aa).

Residue 81–83 (VES) participates in substrate binding. 83-84 (SK) provides a ligand contact to NADPH. C179 serves as the catalytic Thioimide intermediate. D186 acts as the Proton donor in catalysis. Residue 218–219 (AE) coordinates substrate. Residue 247–248 (RG) participates in NADPH binding.

The protein belongs to the GTP cyclohydrolase I family. QueF type 2 subfamily. In terms of assembly, homodimer.

It localises to the cytoplasm. The catalysed reaction is 7-aminomethyl-7-carbaguanine + 2 NADP(+) = 7-cyano-7-deazaguanine + 2 NADPH + 3 H(+). Its pathway is tRNA modification; tRNA-queuosine biosynthesis. Its function is as follows. Catalyzes the NADPH-dependent reduction of 7-cyano-7-deazaguanine (preQ0) to 7-aminomethyl-7-deazaguanine (preQ1). This Rickettsia canadensis (strain McKiel) protein is NADPH-dependent 7-cyano-7-deazaguanine reductase.